Reading from the N-terminus, the 324-residue chain is Lactonase drp35 (324 aa).

Ca(2+) contacts are provided by Glu47, Ser109, Gly111, Asp129, Thr132, Tyr134, Asp137, Asn184, Asp235, and Ser236. The Proton donor role is filled by Asp235.

It belongs to the SMP-30/CGR1 family. The cofactor is Ca(2+).

The protein resides in the cytoplasm. Exhibits lactonase activity. Acts in cells with perturbed membrane integrity and is possibly related to the membrane homeostasis. In Staphylococcus aureus (strain MW2), this protein is Lactonase drp35 (drp35).